A 227-amino-acid polypeptide reads, in one-letter code: 7-cyano-7-deazaguanine synthase (227 aa).

8 to 18 (LSGGLDSATVL) provides a ligand contact to ATP. The Zn(2+) site is built by Cys-191, Cys-201, Cys-204, and Cys-207.

Belongs to the QueC family. Zn(2+) serves as cofactor.

The enzyme catalyses 7-carboxy-7-deazaguanine + NH4(+) + ATP = 7-cyano-7-deazaguanine + ADP + phosphate + H2O + H(+). It functions in the pathway purine metabolism; 7-cyano-7-deazaguanine biosynthesis. Functionally, catalyzes the ATP-dependent conversion of 7-carboxy-7-deazaguanine (CDG) to 7-cyano-7-deazaguanine (preQ(0)). This is 7-cyano-7-deazaguanine synthase from Paramagnetospirillum magneticum (strain ATCC 700264 / AMB-1) (Magnetospirillum magneticum).